We begin with the raw amino-acid sequence, 124 residues long: Small ribosomal subunit protein uS12 (124 aa).

The residue at position 89 (Asp89) is a 3-methylthioaspartic acid. The segment at Leu102 to Ser124 is disordered. A compositionally biased stretch (basic residues) spans Asn109 to Ser124.

It belongs to the universal ribosomal protein uS12 family. Part of the 30S ribosomal subunit. Contacts proteins S8 and S17. May interact with IF1 in the 30S initiation complex.

Its function is as follows. With S4 and S5 plays an important role in translational accuracy. Interacts with and stabilizes bases of the 16S rRNA that are involved in tRNA selection in the A site and with the mRNA backbone. Located at the interface of the 30S and 50S subunits, it traverses the body of the 30S subunit contacting proteins on the other side and probably holding the rRNA structure together. The combined cluster of proteins S8, S12 and S17 appears to hold together the shoulder and platform of the 30S subunit. The polypeptide is Small ribosomal subunit protein uS12 (Francisella philomiragia subsp. philomiragia (strain ATCC 25017 / CCUG 19701 / FSC 153 / O#319-036)).